We begin with the raw amino-acid sequence, 346 residues long: L-threonine dehydratase catabolic TdcB (346 aa).

59-60 (FT) is a binding site for AMP. Lys64 bears the N6-(pyridoxal phosphate)lysine mark. Residues Gln94, 125–126 (GY), and Asn321 contribute to the AMP site.

The protein belongs to the serine/threonine dehydratase family. In terms of assembly, in the native structure, TdcB is in a dimeric form, whereas in the TdcB-AMP complex, it exists in a tetrameric form (dimer of dimers). Requires pyridoxal 5'-phosphate as cofactor.

The enzyme catalyses L-threonine = 2-oxobutanoate + NH4(+). The protein operates within amino-acid degradation; L-threonine degradation via propanoate pathway; propanoate from L-threonine: step 1/4. Its activity is regulated as follows. Each protein molecule can bind up to four molecules of AMP, which act as an allosteric activator to the enzyme. Catalyzes the anaerobic formation of alpha-ketobutyrate and ammonia from threonine in a two-step reaction. The first step involved a dehydration of threonine and a production of enamine intermediates (aminocrotonate), which tautomerizes to its imine form (iminobutyrate). Both intermediates are unstable and short-lived. The second step is the nonenzymatic hydrolysis of the enamine/imine intermediates to form 2-ketobutyrate and free ammonia. In the low water environment of the cell, the second step is accelerated by RidA. The sequence is that of L-threonine dehydratase catabolic TdcB (tdcB) from Staphylococcus aureus (strain bovine RF122 / ET3-1).